Consider the following 590-residue polypeptide: Zinc finger protein 285 (590 aa).

A KRAB domain is found at 8–86; the sequence is VTFKDVAVVF…WKQRIRDLTV (79 aa). The segment at 232–254 adopts a C2H2-type 1 zinc-finger fold; that stretch reads FPCNNCGVAFADDTDPHVHHSTH. The segment at 260–282 adopts a C2H2-type 2; degenerate zinc-finger fold; sequence YKCDQYGKNFSQSQDLIVHCKTH. 9 consecutive C2H2-type zinc fingers follow at residues 316 to 338, 344 to 366, 372 to 394, 400 to 422, 428 to 450, 456 to 478, 484 to 506, 512 to 534, and 540 to 562; these read YKCKECGKGFRRSSSLHNHHRVH, YKCDECGKGFGFRSLLCIHQGVH, YKCEECGKGFDQSSNLLVHQRVH, YKCSECGKCFSSSSVLQVHWRFH, YRCGECGKGFSQCTHLHIHQRVH, YKCNVCGKDFAYSSVLHTHQRVH, YKCEVCGKCFSYSSYFHLHQRDH, YKCDECGKGFSRNSDLNVHLRVH, and YKCKACGKGFSRNSYLLAHQRVH.

The protein belongs to the krueppel C2H2-type zinc-finger protein family.

It localises to the nucleus. In terms of biological role, may be involved in transcriptional regulation. The chain is Zinc finger protein 285 (ZNF285) from Homo sapiens (Human).